We begin with the raw amino-acid sequence, 198 residues long: Na(+)-translocating NADH-quinone reductase subunit E (198 aa).

6 consecutive transmembrane segments (helical) span residues 11–31 (SIFIENMALSFFLGMCTFLAV), 39–59 (FGLGIAVTVVLTISVPVNNLV), 77–97 (FLNFITFIGVIAALVQILEMI), 110–130 (GIFLPLITVNCAIFGGVSFMV), 140–160 (VVYGFGSGVGWMLAIVALAGI), and 176–196 (LGITFITAGLMALGFMSFSGV).

It belongs to the NqrDE/RnfAE family. In terms of assembly, composed of six subunits; NqrA, NqrB, NqrC, NqrD, NqrE and NqrF.

It is found in the cell inner membrane. It carries out the reaction a ubiquinone + n Na(+)(in) + NADH + H(+) = a ubiquinol + n Na(+)(out) + NAD(+). NQR complex catalyzes the reduction of ubiquinone-1 to ubiquinol by two successive reactions, coupled with the transport of Na(+) ions from the cytoplasm to the periplasm. NqrA to NqrE are probably involved in the second step, the conversion of ubisemiquinone to ubiquinol. In Vibrio anguillarum (Listonella anguillarum), this protein is Na(+)-translocating NADH-quinone reductase subunit E.